Consider the following 223-residue polypeptide: Killer cell lectin-like receptor subfamily B member 1B allele B (223 aa).

Over 1–45 (MDTAVVYADLHLARTGEPKHKSPPSLSPDTCQCPRWHRLALKLGC) the chain is Cytoplasmic. The ITIM motif motif lies at 5-10 (VVYADL). The LCK-binding motif signature appears at 31–34 (CQCP). The chain crosses the membrane as a helical; Signal-anchor for type II membrane protein span at residues 46–66 (ACLILLVLSVIGLGVLVLTLL). Over 67 to 223 (QKPLIQNSPA…LKCECMCNGS (157 aa)) the chain is Extracellular. Positions 101-211 (HQDKCFHVSQ…CDSDNLWICQ (111 aa)) constitute a C-type lectin domain. Intrachain disulfides connect Cys-122/Cys-210 and Cys-189/Cys-202.

As to quaternary structure, homodimer; disulfide-linked. Interacts with tyrosine kinase LCK. Binds PTPN6/SHP-1 in a phosphorylation-dependent manner. Expressed in a subset of natural killer cells.

It is found in the membrane. In terms of biological role, receptor for CLEC2D/OCIL. Ligand-binding contributes to inhibition of cytotoxic natural killer (NK) cells. May mediate MHC class I-independent 'missing-self' recognition of allografts, tumor cells and virus-infected cells. This Rattus norvegicus (Rat) protein is Killer cell lectin-like receptor subfamily B member 1B allele B.